The chain runs to 172 residues: Translation initiation factor IF-3 (172 aa).

This sequence belongs to the IF-3 family. In terms of assembly, monomer.

The protein resides in the cytoplasm. In terms of biological role, IF-3 binds to the 30S ribosomal subunit and shifts the equilibrium between 70S ribosomes and their 50S and 30S subunits in favor of the free subunits, thus enhancing the availability of 30S subunits on which protein synthesis initiation begins. The polypeptide is Translation initiation factor IF-3 (Bartonella tribocorum (strain CIP 105476 / IBS 506)).